Consider the following 306-residue polypeptide: Serine/threonine-protein phosphatase PP2A-1 catalytic subunit (306 aa).

Mn(2+) contacts are provided by D54, H56, D82, and N114. H115 serves as the catalytic Proton donor. The Mn(2+) site is built by H164 and H238. L306 is modified (leucine methyl ester).

Belongs to the PPP phosphatase family. PP-2A subfamily. As to quaternary structure, PP2A consists of a common heterodimeric core enzyme, composed of a 36 kDa catalytic subunit (subunit C) and a 65 kDa constant regulatory subunit (subunit A), that associates with a variety of regulatory subunits such as subunits B (the R2/B/PR55/B55, R3/B''/PR72/PR130/PR59 and R5/B'/B56 families). Interacts with TAF12B. Interacts with SRK2E/OST1. Interacts with TAP46. Mn(2+) serves as cofactor. In terms of processing, reversibly methyl esterified on Leu-306 by leucine carboxyl methyltransferase 1 (LCMT1) and pectin methylesterase 1 (PME1). Carboxyl methylation influences the affinity of the catalytic subunit for the different regulatory subunits, thereby modulating the PP2A holoenzyme's substrate specificity, enzyme activity and cellular localization. Phosphorylation of either threonine (by autophosphorylation-activated protein kinase) or tyrosine results in inactivation of the phosphatase. Auto-dephosphorylation has been suggested as a mechanism for reactivation.

It localises to the cytoplasm. It carries out the reaction O-phospho-L-seryl-[protein] + H2O = L-seryl-[protein] + phosphate. The catalysed reaction is O-phospho-L-threonyl-[protein] + H2O = L-threonyl-[protein] + phosphate. The sequence is that of Serine/threonine-protein phosphatase PP2A-1 catalytic subunit from Arabidopsis thaliana (Mouse-ear cress).